Here is a 390-residue protein sequence, read N- to C-terminus: tRNA-specific 2-thiouridylase MnmA (390 aa).

ATP is bound by residues 29–36 (GLSGGVDS) and leucine 55. The active-site Nucleophile is cysteine 116. Cysteine 116 and cysteine 225 form a disulfide bridge. Residue glycine 141 coordinates ATP. The interval 175–177 (KDQ) is interaction with tRNA. Cysteine 225 acts as the Cysteine persulfide intermediate in catalysis. Residues 330–331 (RY) are interaction with tRNA.

Belongs to the MnmA/TRMU family.

Its subcellular location is the cytoplasm. It catalyses the reaction S-sulfanyl-L-cysteinyl-[protein] + uridine(34) in tRNA + AH2 + ATP = 2-thiouridine(34) in tRNA + L-cysteinyl-[protein] + A + AMP + diphosphate + H(+). In terms of biological role, catalyzes the 2-thiolation of uridine at the wobble position (U34) of tRNA, leading to the formation of s(2)U34. This is tRNA-specific 2-thiouridylase MnmA from Prochlorococcus marinus (strain MIT 9515).